The chain runs to 80 residues: Toxin Acra I-3 (80 aa).

The signal sequence occupies residues methionine 1–glycine 22. The region spanning valine 25–leucine 80 is the LCN-type CS-alpha/beta domain. 3 disulfides stabilise this stretch: cysteine 40–cysteine 63, cysteine 49–cysteine 68, and cysteine 53–cysteine 70.

This sequence belongs to the long (3 C-C) scorpion toxin superfamily. Sodium/Potassium channel inhibitor family. In terms of tissue distribution, expressed by the venom gland.

It is found in the secreted. In terms of biological role, probable neurotoxin that inhibits ion channels. Is toxic to mice. This Androctonus crassicauda (Arabian fat-tailed scorpion) protein is Toxin Acra I-3.